We begin with the raw amino-acid sequence, 342 residues long: Ribosomal RNA small subunit methyltransferase C (342 aa).

This sequence belongs to the methyltransferase superfamily. RsmC family. Monomer.

The protein localises to the cytoplasm. The enzyme catalyses guanosine(1207) in 16S rRNA + S-adenosyl-L-methionine = N(2)-methylguanosine(1207) in 16S rRNA + S-adenosyl-L-homocysteine + H(+). Functionally, specifically methylates the guanine in position 1207 of 16S rRNA in the 30S particle. This is Ribosomal RNA small subunit methyltransferase C from Shewanella piezotolerans (strain WP3 / JCM 13877).